Reading from the N-terminus, the 492-residue chain is Cytochrome P450 monooxygenase rdc4 (492 aa).

C435 lines the heme pocket.

It belongs to the cytochrome P450 family. Heme is required as a cofactor.

It participates in secondary metabolite biosynthesis. In terms of biological role, cytochrome P450 monooxygenase; part of the gene cluster that mediates the biosynthesis of radicicol, a resorcylic acid lactone (RAL) that irreversibly inhibits the HSP90 molecular chaperone, an important target for cancer chemotherapy. The radicicol cluster encodes only two apparent post-PKS enzymes, a cytochrome P450 monooxygenase (rdc4) and a non-heme halogenase (rdc2) that could introduce the epoxide and the chlorine, respectively. If this cluster includes all the genes required for radicicol biosynthesis, the remaining structural features of radicicol are presumably generated by the PKSs rdc1 and rdc5. The C-2' ketone could arise if the R-PKS rdc5 and NR-PKS rdc1 each carry out four iterations, in contrast to the five iteration-three iteration split for the hypothemycin PKSs. The origin of the cis 5',6' double bond is not known. The radicicol R-PKS rdc5 ER domain may catalyze either double bond isomerization or reduction in the third iteration. This chain is Cytochrome P450 monooxygenase rdc4, found in Metacordyceps chlamydosporia (Nematophagous fungus).